The following is a 21-amino-acid chain: Cyanophlyctin (21 aa).

Expressed by the skin glands.

It localises to the secreted. Its function is as follows. Has antibacterial activity against E.coli HP101BA (MIC=6.4 uM), K.pneumoniae PTCC1388 (MIC=7.3 uM), M.luteus PTCC1625 (MIC=4.7 uM) and S.aureus PTCC1431 (MIC=5.3 uM). Has no or very limited (&lt;3%) hemolytic activity at concentrations of 15 ug/ml and 60 ug/ml, respectively. The protein is Cyanophlyctin of Euphlyctis cyanophlyctis (Skittering frog).